A 428-amino-acid polypeptide reads, in one-letter code: Gamma-glutamyl phosphate reductase (428 aa).

The protein belongs to the gamma-glutamyl phosphate reductase family.

Its subcellular location is the cytoplasm. It catalyses the reaction L-glutamate 5-semialdehyde + phosphate + NADP(+) = L-glutamyl 5-phosphate + NADPH + H(+). It participates in amino-acid biosynthesis; L-proline biosynthesis; L-glutamate 5-semialdehyde from L-glutamate: step 2/2. Its function is as follows. Catalyzes the NADPH-dependent reduction of L-glutamate 5-phosphate into L-glutamate 5-semialdehyde and phosphate. The product spontaneously undergoes cyclization to form 1-pyrroline-5-carboxylate. The polypeptide is Gamma-glutamyl phosphate reductase (Chelativorans sp. (strain BNC1)).